The chain runs to 377 residues: Adenosine 3'-phospho 5'-phosphosulfate transporter 2 (377 aa).

10 consecutive transmembrane segments (helical) span residues 50-70, 77-97, 115-135, 138-158, 164-184, 195-215, 228-248, 266-286, 293-313, and 317-337; these read LCCG…ELIF, PYGW…GYIE, ALLA…VGYL, PTQV…SVLI, GPMD…FTLA, FGVF…NVQE, VVIY…LLSG, GYAF…LTLV, LAAT…FVFF, and FTIQ…LNVY.

The protein belongs to the nucleotide-sugar transporter family. SLC35B subfamily.

It localises to the golgi apparatus membrane. Mediates the transport of adenosine 3'-phospho 5'-phosphosulfate (PAPS), from cytosol into Golgi. PAPS is a universal sulfuryl donor for sulfation events that take place in the Golgi. Essential for viability. Involved in glycosaminoglycan synthesis and the subsequent signaling. May be involved in hh and dpp signaling by controlling the sulfation of heparan sulfate (HS). This is Adenosine 3'-phospho 5'-phosphosulfate transporter 2 from Anopheles gambiae (African malaria mosquito).